An 885-amino-acid chain; its full sequence is Translation initiation factor IF-2 (885 aa).

2 disordered regions span residues 55–150 (IPDK…ADVT) and 269–300 (NTINSFGEGGIQRRARKKHKKPENKQNSEAVT). Residues 65-146 (EPKAKKEPKK…AEAPKPKESL (82 aa)) show a composition bias toward basic and acidic residues. Residues 281-290 (RRARKKHKKP) show a composition bias toward basic residues. Residues 384-553 (PRAPVITIMG…LLQADLLELK (170 aa)) form the tr-type G domain. Residues 393 to 400 (GHVDHGKT) form a G1 region. Residue 393–400 (GHVDHGKT) participates in GTP binding. A G2 region spans residues 418–422 (GITQH). The G3 stretch occupies residues 439–442 (DTPG). Residues 439–443 (DTPGH) and 493–496 (NKMD) contribute to the GTP site. A G4 region spans residues 493–496 (NKMD). The tract at residues 529-531 (SAK) is G5.

The protein belongs to the TRAFAC class translation factor GTPase superfamily. Classic translation factor GTPase family. IF-2 subfamily.

Its subcellular location is the cytoplasm. In terms of biological role, one of the essential components for the initiation of protein synthesis. Protects formylmethionyl-tRNA from spontaneous hydrolysis and promotes its binding to the 30S ribosomal subunits. Also involved in the hydrolysis of GTP during the formation of the 70S ribosomal complex. This is Translation initiation factor IF-2 from Campylobacter concisus (strain 13826).